A 210-amino-acid polypeptide reads, in one-letter code: Peroxiredoxin-5, mitochondrial (210 aa).

The transit peptide at 1 to 48 (MLQLGLRVLGCKASSVLRASTCLAGRAGRKEAGWECGGARSFSSSAVT) directs the protein to the mitochondrion. Positions 52 to 210 (IKVGDAIPSV…SLAPNILSQL (159 aa)) constitute a Thioredoxin domain. Residue lysine 70 is modified to N6-acetyllysine; alternate. At lysine 70 the chain carries N6-succinyllysine; alternate. Lysine 71 carries the N6-acetyllysine modification. At lysine 79 the chain carries N6-acetyllysine; alternate. Lysine 79 is modified (N6-succinyllysine; alternate). The Cysteine sulfenic acid (-SOH) intermediate role is filled by cysteine 96. Residue cysteine 96 is the site of S-palmitoyl cysteine attachment. Cysteines 96 and 200 form a disulfide. Lysine 112 is modified (N6-succinyllysine). Phosphoserine is present on residues serine 167 and serine 178. The Microbody targeting signal motif lies at 208-210 (SQL).

The protein belongs to the peroxiredoxin family. Prx5 subfamily. As to quaternary structure, monomer. Post-translationally, S-palmitoylated. Palmitoylation occurs on the active site, inhibiting its reactivity; therefore PRDX5 palmitoylation status determines its antioxidant capacity. In terms of processing, S-palmitoylated. Depalmitoylated by ABHD10. As to expression, widely expressed.

It is found in the mitochondrion. The protein localises to the cytoplasm. Its subcellular location is the peroxisome matrix. It carries out the reaction a hydroperoxide + [thioredoxin]-dithiol = an alcohol + [thioredoxin]-disulfide + H2O. In terms of biological role, thiol-specific peroxidase that catalyzes the reduction of hydrogen peroxide and organic hydroperoxides to water and alcohols, respectively. Plays a role in cell protection against oxidative stress by detoxifying peroxides and as sensor of hydrogen peroxide-mediated signaling events. The sequence is that of Peroxiredoxin-5, mitochondrial from Mus musculus (Mouse).